A 418-amino-acid polypeptide reads, in one-letter code: Thermolabile hemolysin (418 aa).

An N-terminal signal peptide occupies residues 1–19 (MMKKTITLLTALLPLASAV). Serine 153 acts as the Nucleophile in catalysis. Residues aspartate 390 and histidine 393 contribute to the active site.

This sequence belongs to the 'GDSL' lipolytic enzyme family. There are two forms of LDH. The LDH(S) may be a protein in which 13 residues of the N-terminal of LDH(L) are deleted.

Its subcellular location is the secreted. Phospholipase hydrolyzing both fatty acid esters of phospholipid, i.e. it hydrolyzes phosphatidylcholine (PC) to lysophosphatidylcholine (LPC) and then LPC to glycerophosphorylcholine (GPC). This chain is Thermolabile hemolysin, found in Vibrio parahaemolyticus serotype O3:K6 (strain RIMD 2210633).